The primary structure comprises 217 residues: Peroxiredoxin Q, chloroplastic (217 aa).

The N-terminal 66 residues, 1–66 (MAFAASTACC…RRRAASTGIV (66 aa)), are a transit peptide targeting the chloroplast. A Thioredoxin domain is found at 70–217 (VSKGSVPPNF…GETLKIIQNL (148 aa)). Cysteine 112 acts as the Cysteine sulfenic acid (-SOH) intermediate in catalysis. A disulfide bond links cysteine 112 and cysteine 117.

The protein belongs to the peroxiredoxin family. BCP/PrxQ subfamily. In terms of assembly, monomer.

The protein resides in the plastid. It is found in the chloroplast thylakoid lumen. The catalysed reaction is a hydroperoxide + [thioredoxin]-dithiol = an alcohol + [thioredoxin]-disulfide + H2O. Functionally, thiol-specific peroxidase that catalyzes the reduction of hydrogen peroxide and organic hydroperoxides to water and alcohols, respectively. Plays a role in cell protection against oxidative stress by detoxifying peroxides. The chain is Peroxiredoxin Q, chloroplastic (PRX1) from Triticum aestivum (Wheat).